The sequence spans 260 residues: Vaa serine proteinase homolog 1 (260 aa).

An N-terminal signal peptide occupies residues 1 to 18; it reads MVLIRVLANLLVLQLSYA. Positions 19–24 are excised as a propeptide; that stretch reads QKSSEL. In terms of domain architecture, Peptidase S1 spans 25–251; the sequence is VIGGDECNIN…YTDWIQSIIA (227 aa). 6 cysteine pairs are disulfide-bonded: Cys31–Cys165, Cys52–Cys68, Cys100–Cys258, Cys144–Cys212, Cys176–Cys191, and Cys202–Cys227. Asn123 carries an N-linked (GlcNAc...) asparagine glycan. Positions 172 to 186 are key residues for binding to FVIIIa; it reads DYSVCQKVYRKLPEK. Residue Asn253 is glycosylated (N-linked (GlcNAc...) asparagine).

The protein belongs to the peptidase S1 family. Snake venom subfamily. N-glycosylated. The toxin exists in multiple glycoforms. As to expression, expressed by the venom gland.

Its subcellular location is the secreted. This is the first member of the serine protease family that has strong anticoagulant activity and lacks enzymatic activity. It inhibits activities of three blood coagulation complexes: (1) prothrombinase complex (composed of blood coagulation factors Va and Xa (F5 and F10)) (IC(50)=164.1 nM), (2) intrinsic tenase complex (composed of factors VIIIa and IXa (F8 and F9)), and (3) extrinsic tenase complex (composed of tissue factor and factor VIIa (F7)). The toxin also has been observed to bind prothrombin, factor FVa, non-activated and activated forms of factors FVII (F7) (FVII and FVIIa), factor FVIIIa (F8), factors FIX and FIXa (F9) and factors FX and FXa (F10). The toxin inhibits the activity of the intrinsic tenase complex mainly by competing with FIXa (F9) for binding to FVIIIa (F8). In Vipera ammodytes ammodytes (Western sand viper), this protein is Vaa serine proteinase homolog 1.